The primary structure comprises 118 residues: Vitelline coat lysin (118 aa).

The polypeptide is Vitelline coat lysin (Tegula pfeifferi (Pfeiffer's top shell)).